A 123-amino-acid chain; its full sequence is Large ribosomal subunit protein bL12 (123 aa).

It belongs to the bacterial ribosomal protein bL12 family. As to quaternary structure, homodimer. Part of the ribosomal stalk of the 50S ribosomal subunit. Forms a multimeric L10(L12)X complex, where L10 forms an elongated spine to which 2 to 4 L12 dimers bind in a sequential fashion. Binds GTP-bound translation factors.

Functionally, forms part of the ribosomal stalk which helps the ribosome interact with GTP-bound translation factors. Is thus essential for accurate translation. The polypeptide is Large ribosomal subunit protein bL12 (Bartonella tribocorum (strain CIP 105476 / IBS 506)).